We begin with the raw amino-acid sequence, 213 residues long: RNA pyrophosphohydrolase (213 aa).

Residues 6–149 (GFRPNVGIVL…KRGVYEIALT (144 aa)) enclose the Nudix hydrolase domain. Residues 38-59 (GGIDRGETPEQAMIRELHEEVG) carry the Nudix box motif. The interval 185 to 213 (NFELPPGGSFEPNPQTSYGLDASGKPHET) is disordered.

This sequence belongs to the Nudix hydrolase family. RppH subfamily. Requires a divalent metal cation as cofactor.

In terms of biological role, accelerates the degradation of transcripts by removing pyrophosphate from the 5'-end of triphosphorylated RNA, leading to a more labile monophosphorylated state that can stimulate subsequent ribonuclease cleavage. The protein is RNA pyrophosphohydrolase of Albidiferax ferrireducens (strain ATCC BAA-621 / DSM 15236 / T118) (Rhodoferax ferrireducens).